The chain runs to 294 residues: Lipoyl synthase (294 aa).

Positions 38, 43, 49, 64, 68, 71, and 277 each coordinate [4Fe-4S] cluster. The Radical SAM core domain maps to 50-266; that stretch reads WSRGTATFLL…RSFAEGAGFR (217 aa).

The protein belongs to the radical SAM superfamily. Lipoyl synthase family. Requires [4Fe-4S] cluster as cofactor.

It localises to the cytoplasm. It carries out the reaction [[Fe-S] cluster scaffold protein carrying a second [4Fe-4S](2+) cluster] + N(6)-octanoyl-L-lysyl-[protein] + 2 oxidized [2Fe-2S]-[ferredoxin] + 2 S-adenosyl-L-methionine + 4 H(+) = [[Fe-S] cluster scaffold protein] + N(6)-[(R)-dihydrolipoyl]-L-lysyl-[protein] + 4 Fe(3+) + 2 hydrogen sulfide + 2 5'-deoxyadenosine + 2 L-methionine + 2 reduced [2Fe-2S]-[ferredoxin]. It participates in protein modification; protein lipoylation via endogenous pathway; protein N(6)-(lipoyl)lysine from octanoyl-[acyl-carrier-protein]: step 2/2. Functionally, catalyzes the radical-mediated insertion of two sulfur atoms into the C-6 and C-8 positions of the octanoyl moiety bound to the lipoyl domains of lipoate-dependent enzymes, thereby converting the octanoylated domains into lipoylated derivatives. The polypeptide is Lipoyl synthase (Pelodictyon phaeoclathratiforme (strain DSM 5477 / BU-1)).